The primary structure comprises 295 residues: Ribosomal RNA small subunit methyltransferase A (295 aa).

S-adenosyl-L-methionine-binding residues include Asn40, Val42, Gly67, Glu88, Asp118, and Asn135.

This sequence belongs to the class I-like SAM-binding methyltransferase superfamily. rRNA adenine N(6)-methyltransferase family. RsmA subfamily.

The protein localises to the cytoplasm. The catalysed reaction is adenosine(1518)/adenosine(1519) in 16S rRNA + 4 S-adenosyl-L-methionine = N(6)-dimethyladenosine(1518)/N(6)-dimethyladenosine(1519) in 16S rRNA + 4 S-adenosyl-L-homocysteine + 4 H(+). Its function is as follows. Specifically dimethylates two adjacent adenosines (A1518 and A1519) in the loop of a conserved hairpin near the 3'-end of 16S rRNA in the 30S particle. May play a critical role in biogenesis of 30S subunits. This Arthrobacter sp. (strain FB24) protein is Ribosomal RNA small subunit methyltransferase A.